A 288-amino-acid polypeptide reads, in one-letter code: NGG1-interacting factor 3 (288 aa).

This sequence belongs to the GTP cyclohydrolase I type 2/NIF3 family. As to quaternary structure, may interact with NGG1.

The protein resides in the mitochondrion. The chain is NGG1-interacting factor 3 from Saccharomyces cerevisiae (strain ATCC 204508 / S288c) (Baker's yeast).